We begin with the raw amino-acid sequence, 688 residues long: UvrABC system protein B (688 aa).

The region spanning 31–414 is the Helicase ATP-binding domain; the sequence is GRITAGETDV…LGIADGVVEQ (384 aa). 44–51 is a binding site for ATP; sequence GATGTGKS. A Beta-hairpin motif is present at residues 97–120; sequence YYDYYQPEAYVPQTDTFIEKDSSI. Residues 434 to 600 enclose the Helicase C-terminal domain; the sequence is QIDDLLEEIR…PLRKRIADIT (167 aa). The interval 614–633 is disordered; that stretch reads LAGRDQKRKSPTPSLRSGGI. The UVR domain occupies 642–677; it reads ESLIADLNAQMLAAAGELKFELAARLRDELSDLKRD.

The protein belongs to the UvrB family. Forms a heterotetramer with UvrA during the search for lesions. Interacts with UvrC in an incision complex.

The protein localises to the cytoplasm. The UvrABC repair system catalyzes the recognition and processing of DNA lesions. A damage recognition complex composed of 2 UvrA and 2 UvrB subunits scans DNA for abnormalities. Upon binding of the UvrA(2)B(2) complex to a putative damaged site, the DNA wraps around one UvrB monomer. DNA wrap is dependent on ATP binding by UvrB and probably causes local melting of the DNA helix, facilitating insertion of UvrB beta-hairpin between the DNA strands. Then UvrB probes one DNA strand for the presence of a lesion. If a lesion is found the UvrA subunits dissociate and the UvrB-DNA preincision complex is formed. This complex is subsequently bound by UvrC and the second UvrB is released. If no lesion is found, the DNA wraps around the other UvrB subunit that will check the other stand for damage. The chain is UvrABC system protein B from Leifsonia xyli subsp. xyli (strain CTCB07).